Reading from the N-terminus, the 377-residue chain is Spermidine/putrescine import ATP-binding protein PotA (377 aa).

Positions 18–248 (IRLSGISKSF…PKNLFVARFI (231 aa)) constitute an ABC transporter domain. 50-57 (GPSGCGKT) provides a ligand contact to ATP.

It belongs to the ABC transporter superfamily. Spermidine/putrescine importer (TC 3.A.1.11.1) family. In terms of assembly, the complex is composed of two ATP-binding proteins (PotA), two transmembrane proteins (PotB and PotC) and a solute-binding protein (PotD).

Its subcellular location is the cell inner membrane. The enzyme catalyses ATP + H2O + polyamine-[polyamine-binding protein]Side 1 = ADP + phosphate + polyamineSide 2 + [polyamine-binding protein]Side 1.. Functionally, part of the ABC transporter complex PotABCD involved in spermidine/putrescine import. Responsible for energy coupling to the transport system. The chain is Spermidine/putrescine import ATP-binding protein PotA from Vibrio parahaemolyticus serotype O3:K6 (strain RIMD 2210633).